The following is a 330-amino-acid chain: UPF0353 protein MAP_3434 (330 aa).

The next 2 membrane-spanning stretches (helical) occupy residues 21–41 (GMLL…VVQA) and 63–83 (LPIA…ATPT). The region spanning 94–289 (VIMLVIDMSQ…GELQKSYNAI (196 aa)) is the VWFA domain. The helical transmembrane segment at 304–324 (AGWLRLGVLTALIATALALLI) threads the bilayer.

The protein belongs to the UPF0353 family.

Its subcellular location is the cell membrane. The polypeptide is UPF0353 protein MAP_3434 (Mycolicibacterium paratuberculosis (strain ATCC BAA-968 / K-10) (Mycobacterium paratuberculosis)).